We begin with the raw amino-acid sequence, 316 residues long: Protoheme IX farnesyltransferase (316 aa).

A run of 9 helical transmembrane segments spans residues 29–49, 54–74, 102–122, 123–143, 151–171, 179–199, 224–241, 245–267, and 283–303; these read IIPL…EGRV, LLIT…LNCI, LIFA…FVNV, LSGC…THWL, IVIG…AVTG, VLFA…ALMI, IWYY…LVYP, LGIL…AWQL, and FSIF…LPVT.

This sequence belongs to the UbiA prenyltransferase family. Protoheme IX farnesyltransferase subfamily.

The protein localises to the cell inner membrane. The catalysed reaction is heme b + (2E,6E)-farnesyl diphosphate + H2O = Fe(II)-heme o + diphosphate. It functions in the pathway porphyrin-containing compound metabolism; heme O biosynthesis; heme O from protoheme: step 1/1. Its function is as follows. Converts heme B (protoheme IX) to heme O by substitution of the vinyl group on carbon 2 of heme B porphyrin ring with a hydroxyethyl farnesyl side group. This is Protoheme IX farnesyltransferase from Synechocystis sp. (strain ATCC 27184 / PCC 6803 / Kazusa).